The following is a 312-amino-acid chain: Malate dehydrogenase (312 aa).

NAD(+) contacts are provided by residues 12–17 (GAGFTG) and Asp36. Substrate is bound by residues Arg87 and Arg93. Residues Asn100 and 123-125 (LTN) each bind NAD(+). Asn125 contributes to the substrate binding site. The residue at position 149 (Ser149) is a Phosphoserine. Arg156 serves as a coordination point for substrate. Residue His180 is the Proton acceptor of the active site.

Belongs to the LDH/MDH superfamily. MDH type 3 family.

The enzyme catalyses (S)-malate + NAD(+) = oxaloacetate + NADH + H(+). Catalyzes the reversible oxidation of malate to oxaloacetate. The chain is Malate dehydrogenase from Geobacillus sp. (strain WCH70).